The sequence spans 108 residues: Glutaredoxin-1 (108 aa).

Residues 3–106 (EEFVQQRLAN…DILSSIGVLR (104 aa)) form the Glutaredoxin domain. C23 and C26 form a disulfide bridge.

Belongs to the glutaredoxin family.

The protein localises to the virion. Its function is as follows. Displays thioltransferase and dehydroascorbate reductase activities. This chain is Glutaredoxin-1 (OPG075), found in Vaccinia virus (strain Copenhagen) (VACV).